The chain runs to 264 residues: MYAQPKLTSAEYVQHHMSHWKLNLHNFTFTDGGFWTLNLDTLIISVVLGALFILIFYIVARRATASVPGKWQNAIEMAVEAADGTVKDSFHGDRSLVAPLALTIFIWVFLMNFMDLVPVDLIPRLFQMGGVEHFKAVPTADPTLTFAMSITVFVLVIFYNFKMKGAIGLGKEVLSRPFGWYLMPINVIFRLIDEGVKPISLALRLFGNLFAGELIFILIALLPWWSQFTLGMVWTLFHLLVITVQAFIFMMLTVVYISLAAESH.

The next 5 helical transmembrane spans lie at 39–59 (LDTL…FYIV), 97–117 (VAPL…MDLV), 139–159 (TADP…VIFY), 205–225 (LFGN…LPWW), and 239–259 (LLVI…YISL).

Belongs to the ATPase A chain family. In terms of assembly, F-type ATPases have 2 components, CF(1) - the catalytic core - and CF(0) - the membrane proton channel. CF(1) has five subunits: alpha(3), beta(3), gamma(1), delta(1), epsilon(1). CF(0) has three main subunits: a(1), b(2) and c(9-12). The alpha and beta chains form an alternating ring which encloses part of the gamma chain. CF(1) is attached to CF(0) by a central stalk formed by the gamma and epsilon chains, while a peripheral stalk is formed by the delta and b chains.

It localises to the cell inner membrane. Functionally, key component of the proton channel; it plays a direct role in the translocation of protons across the membrane. The chain is ATP synthase subunit a from Coxiella burnetii (strain Dugway 5J108-111).